The sequence spans 68 residues: SLFELGKMILQETGKNPAKSYGAYGCNCGVLGRGKPKEATQRCCYVHKCCYKKLTGCDPKKDRYSYSW.

A disulfide bridge connects residues Cys28 and Cys44.

The protein belongs to the phospholipase A2 family. Group II subfamily. K49 sub-subfamily. As to expression, expressed by the venom gland.

It is found in the secreted. Functionally, snake venom phospholipase A2 (PLA2) that lacks enzymatic activity. Is myotoxic, induces edema, and causes systemic effects (renal changes that lead to proteinuria) on mice. A model of myotoxic mechanism has been proposed: an apo Lys49-PLA2 is activated by the entrance of a hydrophobic molecule (e.g. fatty acid) at the hydrophobic channel of the protein leading to a reorientation of a monomer. This reorientation causes a transition between 'inactive' to 'active' states, causing alignment of C-terminal and membrane-docking sites (MDoS) side-by-side and putting the membrane-disruption sites (MDiS) in the same plane, exposed to solvent and in a symmetric position for both monomers. The MDoS region stabilizes the toxin on membrane by the interaction of charged residues with phospholipid head groups. Subsequently, the MDiS region destabilizes the membrane with penetration of hydrophobic residues. This insertion causes a disorganization of the membrane, allowing an uncontrolled influx of ions (i.e. calcium and sodium), and eventually triggering irreversible intracellular alterations and cell death. This chain is Basic phospholipase A2 homolog BdipTx-I, found in Bothrops diporus (Chaco lancehead).